We begin with the raw amino-acid sequence, 201 residues long: Cytochrome c oxidase assembly protein CtaG (201 aa).

Over 1-13 the chain is Cytoplasmic; the sequence is MTDQGENEKKQRR. The chain crosses the membrane as a helical; Signal-anchor for type II membrane protein span at residues 14–36; sequence SNATIAVACLSFFVCMIGAAYAS. Residues 37–201 lie on the Periplasmic side of the membrane; that stretch reads VPLYRIFCQV…KAVGSTRNGG (165 aa).

Belongs to the COX11/CtaG family.

Its subcellular location is the cell inner membrane. Exerts its effect at some terminal stage of cytochrome c oxidase synthesis, probably by being involved in the insertion of the copper B into subunit I. The chain is Cytochrome c oxidase assembly protein CtaG from Brucella suis (strain ATCC 23445 / NCTC 10510).